The sequence spans 778 residues: MKQIRLLAQYYVDLMMKLGLVRFSMLLALALVVLAIVVQMAVTMVLHGQVESIDVIRSIFFGLLITPWAVYFLSVVVEQLEESRQRLSRLVQKLEEMRERDLSLNVQLKDNIAQLNQEIAVREKAEAELQETFGQLKIEIKEREETQIQLEQQSSFLRSFLDASPDLVFYRNEDKEFSGCNRAMELLTGKSEKQLVHLKPADVYSPEAAAKVIETDEKVFRHNVSLTYEQWLDYPDGRKACFEIRKVPYYDRVGKRHGLMGFGRDITERKRYQDALERASRDKTTFISTISHELRTPLNGIVGLSRILLDTELTAEQEKYLKTIHVSAVTLGNIFNDIIDMDKMERRKVQLDNQPVDFTSFLADLENLSALQAQQKGLRFNLEPTLPLPHQVITDGTRLRQILWNLISNAVKFTQQGQVTVRVRYDEGDMLHFEVEDSGIGIPQDELDKIFAMYYQVKDSHGGKPATGTGIGLAVSRRLAKNMGGDITVTSEQGKGSTFTLTIHAPSVAEEVDDAFDEDDMPLPALNVLLVEDIELNVIVARSVLEKLGNSVDVAMTGKAALEMFKPGEYDLVLLDIQLPDMTGLDISRELTKRYPREDLPPLVALTANVLKDKQEYLNAGMDDVLSKPLSVPALTAMIKKFWDTQDDEESTVTTEENSKSEALLDIPMLEQYLELVGPKLITDGLAVFEKMMPGYVNVLESNLTAQDKKGIVEEGHKIKGAAGSVGLRHLQQLGQQIQSPDLPAWEDNVGEWIEEMKEEWRHDVEVLKAWVAKATKK.

Topologically, residues 1–25 (MKQIRLLAQYYVDLMMKLGLVRFSM) are cytoplasmic. A helical membrane pass occupies residues 26–46 (LLALALVVLAIVVQMAVTMVL). The Periplasmic segment spans residues 47-57 (HGQVESIDVIR). A helical membrane pass occupies residues 58–78 (SIFFGLLITPWAVYFLSVVVE). The Cytoplasmic portion of the chain corresponds to 79 to 778 (QLEESRQRLS…KAWVAKATKK (700 aa)). Residues 153–223 (QSSFLRSFLD…ETDEKVFRHN (71 aa)) form the PAS domain. The region spanning 226–278 (LTYEQWLDYPDGRKACFEIRKVPYYDRVGKRHGLMGFGRDITERKRYQDALER) is the PAC domain. The Histidine kinase domain occupies 289–507 (TISHELRTPL…TFTLTIHAPS (219 aa)). His292 bears the Phosphohistidine; by autocatalysis mark. One can recognise a Response regulatory domain in the interval 527-643 (NVLLVEDIEL…ALTAMIKKFW (117 aa)). A 4-aspartylphosphate modification is found at Asp576. One can recognise an HPt domain in the interval 678–771 (GPKLITDGLA…RHDVEVLKAW (94 aa)). The residue at position 717 (His717) is a Phosphohistidine.

Activation requires a sequential transfer of a phosphate group from a His in the primary transmitter domain, to an Asp in the receiver domain and to a His in the secondary transmitter domain.

Its subcellular location is the cell inner membrane. The catalysed reaction is ATP + protein L-histidine = ADP + protein N-phospho-L-histidine.. Its function is as follows. Member of the two-component regulatory system ArcB/ArcA. Sensor-regulator protein for anaerobic repression of the arc modulon. Activates ArcA via a four-step phosphorelay. ArcB can also dephosphorylate ArcA by a reverse phosphorelay involving His-717 and Asp-576. This Escherichia coli O157:H7 protein is Aerobic respiration control sensor protein ArcB (arcB).